The primary structure comprises 307 residues: Protoheme IX farnesyltransferase (307 aa).

9 helical membrane passes run 31–51 (VTQLAVFCAIIGMFLATPGMV), 53–73 (WPVLIGGAAGIWLLAGAAFAI), 103–123 (TLVFSAILGGAGMWLLHVYAN), 125–145 (LTMWLTFATFLGYAVVYTILL), 153–173 (IVIGGLSGAMPPALGWAAVAG), 179–199 (AWFLVLIIFTWTPPHFWALAL), 223–243 (LLHILLYTLIMIAATLLPFVY), 246–266 (SGYIYLAAALALGAGFLAYAW), and 285–305 (ILYLSLLFAALLVDHYFKFVP).

Belongs to the UbiA prenyltransferase family. Protoheme IX farnesyltransferase subfamily.

Its subcellular location is the cell inner membrane. It carries out the reaction heme b + (2E,6E)-farnesyl diphosphate + H2O = Fe(II)-heme o + diphosphate. The protein operates within porphyrin-containing compound metabolism; heme O biosynthesis; heme O from protoheme: step 1/1. Functionally, converts heme B (protoheme IX) to heme O by substitution of the vinyl group on carbon 2 of heme B porphyrin ring with a hydroxyethyl farnesyl side group. The protein is Protoheme IX farnesyltransferase of Cupriavidus taiwanensis (strain DSM 17343 / BCRC 17206 / CCUG 44338 / CIP 107171 / LMG 19424 / R1) (Ralstonia taiwanensis (strain LMG 19424)).